We begin with the raw amino-acid sequence, 184 residues long: MNWRSEHIWIEFITGSRKTSNFFWACILFLGSLGFLVVGTSSYLGRNLISVFPSQQISFFPQGIVMSFYGIAGLFISSYLWSTILWNVGSGYDRFDRKEGIVCIFRWGFPGKNRRIVLRFLMSDVQSIRVEVKEGLYTRRVLYMEVRGQGTIPLTRTDENLTPREMEQKAAELAYFLRVPIEGF.

Transmembrane regions (helical) follow at residues F22–S42 and I57–S77.

It belongs to the Ycf4 family.

It is found in the plastid. The protein localises to the chloroplast thylakoid membrane. Seems to be required for the assembly of the photosystem I complex. In Lemna minor (Common duckweed), this protein is Photosystem I assembly protein Ycf4.